A 434-amino-acid polypeptide reads, in one-letter code: Zinc finger protein kipf (434 aa).

Residues N7–V88 enclose the ZAD domain. Zn(2+) is bound by residues C9, C12, C61, and C64. The tract at residues Q117–E173 is disordered. A C2H2-type 1; degenerate zinc finger spans residues Y197–L219. 3 C2H2-type zinc fingers span residues N221–H243, H249–H271, and L277–H299. The disordered stretch occupies residues H295 to K328. Phosphoserine occurs at positions 316 and 319. C2H2-type zinc fingers lie at residues P348–H370, K377–H399, and F404–H427.

In terms of assembly, homodimer; mediated by the ZAD domain. Interacts (via C2H2 type zinc finger 4) with rhi/rhino (via Chromo domain). Dimerization is required for association with DNA and interaction with rhi/rhino. Primarily expressed in ovaries and absent from testes. In ovaries very low levels in germline stem cells and cystoblasts but abundant in developing cysts and polyploid nurse cells.

Its subcellular location is the nucleus. It localises to the chromosome. Its function is as follows. DNA-binding zinc finger protein that recruits chromo domain protein rhino/rhi to specific chromatin regions enriched in H3K9me2/3 histone methylation, mediating piRNA (piwi-interacting RNA) biogenesis. May bind to GC rich DNA sequences including a 5'-GRGGN-3' sequence motif. Nucleates rhi/rhino accumulation and stabilizes its expansion. Involved in piRNA transposon repression, particularly in the female ovary during oogenesis. The polypeptide is Zinc finger protein kipf (Drosophila melanogaster (Fruit fly)).